Consider the following 83-residue polypeptide: Small ribosomal subunit protein eS21 (83 aa).

The residue at position 1 (Met1) is an N-acetylmethionine. Lys41 is covalently cross-linked (Glycyl lysine isopeptide (Lys-Gly) (interchain with G-Cter in SUMO2)). Lys81 carries the post-translational modification N6-acetyllysine.

Belongs to the eukaryotic ribosomal protein eS21 family. In terms of assembly, component of the 40S small ribosomal subunit.

The protein resides in the cytoplasm. The protein localises to the cytosol. It localises to the rough endoplasmic reticulum. Functionally, component of the small ribosomal subunit. The ribosome is a large ribonucleoprotein complex responsible for the synthesis of proteins in the cell. The protein is Small ribosomal subunit protein eS21 (RPS21) of Sus scrofa (Pig).